A 332-amino-acid polypeptide reads, in one-letter code: Isopentenyl phosphate kinase (332 aa).

Methionine 1 bears the N-acetylmethionine mark. ATP is bound at residue 18-22 (KLGGA). Alanine 96 provides a ligand contact to substrate. Glycine 97 provides a ligand contact to ATP. 2 residues coordinate substrate: histidine 101 and glycine 202. Residues aspartate 223, 228-233 (YDRPPS), glycine 279, and lysine 283 each bind ATP.

The protein belongs to the isopentenyl phosphate kinase family.

It is found in the cytoplasm. The protein resides in the cytosol. The catalysed reaction is isopentenyl phosphate + ATP = isopentenyl diphosphate + ADP. Its function is as follows. Catalyzes the formation of isopentenyl diphosphate (IPP), the universal five-carbon isoprenoid building block of all natural isoprenoids. Acts in parallel with the mevalonate (MVA) pathway and plays an important role in regulating the formation of both MVA and methylerythritol phosphate (MEP) pathway-derived terpenoid compounds by controlling the ratio of isopentenyl phosphate (IP) and dimethylallyl phosphate (DMAP) to isopentenyl diphosphate (IPP) and dimethylallyl diphosphate (DMAPP). Controls the levels of IP and DMAP that are competitive inhibitors of the farnesyl diphosphate synthase. Regulates the production of farnesyl diphosphate-derived terpenoids in the cytosol, and geranyl diphosphate-derived compounds in plastids. In Arabidopsis thaliana (Mouse-ear cress), this protein is Isopentenyl phosphate kinase.